Reading from the N-terminus, the 383-residue chain is DNA dC-&gt;dU-editing enzyme APOBEC-3G (383 aa).

Residues methionine 1–serine 60 are essential for cytoplasmic localization. 2 CMP/dCMP-type deaminase domains span residues arginine 29–leucine 138 and glycine 214–leucine 327. Threonine 32 carries the post-translational modification Phosphothreonine; by PKA. Positions 65, 97, and 100 each coordinate Zn(2+). The necessary for homooligomerization stretch occupies residues lysine 209–alanine 335. The interval serine 213–glutamine 215 is interaction with DNA. Threonine 218 is modified (phosphothreonine; by PKA and CAMK2). Zn(2+) is bound at residue histidine 257. The Proton donor role is filled by glutamate 259. 2 residues coordinate Zn(2+): cysteine 287 and cysteine 290. Residues arginine 312 to arginine 319 form an interaction with DNA region.

The protein belongs to the cytidine and deoxycytidylate deaminase family. In terms of assembly, homodimer. Requires Zn(2+) as cofactor.

Its subcellular location is the cytoplasm. The protein resides in the nucleus. The protein localises to the P-body. It carries out the reaction a 2'-deoxycytidine in single-stranded DNA + H2O + H(+) = a 2'-deoxyuridine in single-stranded DNA + NH4(+). In terms of biological role, DNA deaminase (cytidine deaminase) which acts as an inhibitor of retrovirus replication and retrotransposon mobility. After the penetration of retroviral nucleocapsids into target cells of infection and the initiation of reverse transcription, it can induce the conversion of cytosine to uracil in the minus-sense single-strand viral DNA, leading to G-to-A hypermutations in the subsequent plus-strand viral DNA. The resultant detrimental levels of mutations in the proviral genome, along with a deamination-independent mechanism that works prior to the proviral integration, together exert efficient antiretroviral effects in infected target cells. Selectively targets single-stranded DNA and does not deaminate double-stranded DNA or single- or double-stranded RNA. The polypeptide is DNA dC-&gt;dU-editing enzyme APOBEC-3G (APOBEC3G) (Papio anubis (Olive baboon)).